Consider the following 288-residue polypeptide: General transcription factor IIE subunit 2 (288 aa).

The interval 16 to 56 (ALTTPAVEKRPSASSESSKKKRAKLELSSTSGSKPSSDGSN) is disordered. Residues 41 to 56 (ELSSTSGSKPSSDGSN) show a composition bias toward low complexity. Residues 63–143 (SLSGSSGYKF…YAFKPKYNLK (81 aa)) constitute a DNA-binding region (TFIIE beta).

The protein belongs to the TFIIE beta subunit family. As to quaternary structure, tetramer of two alpha and two beta chains.

The protein localises to the nucleus. Its function is as follows. Recruits TFIIH to the initiation complex and stimulates the RNA polymerase II C-terminal domain kinase and DNA-dependent ATPase activities of TFIIH. Both TFIIH and TFIIE are required for promoter clearance by RNA polymerase. This is General transcription factor IIE subunit 2 (gtf2e2) from Xenopus laevis (African clawed frog).